We begin with the raw amino-acid sequence, 206 residues long: 2,3-bisphosphoglycerate-dependent phosphoglycerate mutase (206 aa).

Residues 9–16 (RHGQSEWN), 22–23 (TG), Arg61, 88–91 (ERDY), Lys99, 115–116 (RR), and 159–160 (GN) each bind substrate. His10 serves as the catalytic Tele-phosphohistidine intermediate. The active-site Proton donor/acceptor is the Glu88.

Belongs to the phosphoglycerate mutase family. BPG-dependent PGAM subfamily. As to quaternary structure, homodimer.

It carries out the reaction (2R)-2-phosphoglycerate = (2R)-3-phosphoglycerate. The protein operates within carbohydrate degradation; glycolysis; pyruvate from D-glyceraldehyde 3-phosphate: step 3/5. Functionally, catalyzes the interconversion of 2-phosphoglycerate and 3-phosphoglycerate. The polypeptide is 2,3-bisphosphoglycerate-dependent phosphoglycerate mutase (Brucella abortus (strain S19)).